The following is a 112-amino-acid chain: UPF0102 protein CFF8240_0294 (112 aa).

Belongs to the UPF0102 family.

In Campylobacter fetus subsp. fetus (strain 82-40), this protein is UPF0102 protein CFF8240_0294.